Consider the following 268-residue polypeptide: tRNA threonylcarbamoyladenosine dehydratase (268 aa).

A helical transmembrane segment spans residues 237–257; that stretch reads GFGAATMVTATFGFVAVSHAL.

Belongs to the HesA/MoeB/ThiF family. In terms of assembly, interacts with CsdE.

Its subcellular location is the membrane. Catalyzes the ATP-dependent dehydration of threonylcarbamoyladenosine at position 37 (t(6)A37) to form cyclic t(6)A37 (ct(6)A37) in tRNAs that read codons beginning with adenine. TcdA is also part of a sulfur transfer pathway; is able to accept sulfur from CsdA directly in vitro, but CsdE might act as the sulfur donor in vivo. The protein is tRNA threonylcarbamoyladenosine dehydratase (tcdA) of Escherichia coli (strain K12).